A 318-amino-acid polypeptide reads, in one-letter code: Thiohydrolase aneE (318 aa).

The protein belongs to the polyketide transferase af380 family.

The catalysed reaction is aculene D + L-prolyl-[peptidyl-carrier protein] = aculene B + holo-[peptidyl-carrier protein]. The enzyme catalyses aculene C + L-prolyl-[peptidyl-carrier protein] = aculene A + holo-[peptidyl-carrier protein]. Its pathway is secondary metabolite biosynthesis. In terms of biological role, thiohydrolase; part of the gene cluster that mediates the biosynthesis of aculenes, a unique type of norsesquiterpenes that contain a nordaucane skeleton linked to an L-proline moiety and are of mixed biosynthetic origin. The pathway begins with the synthesis of dauca-4,7-diene by the terpene cyclase aneC using farnesyl pyrophosphate (FPP) as substrate. The cytochrome P450 monooxygenase aneF then performs the initial oxidation at C-12 of dauca-4,7-diene to yield asperaculane D. Asperaculane D is substrate of the cytochrome P450 monooxygenase aneD for C-10 hydroxylation to yield asperaculane E. The cytochrome P450 monooxygenase aneG then converts asperaculane E into aculene D via C-2 oxidation. The monomodular nonribosomal peptide synthtase aneB adenylates L-proline and the thiohydrolase aneE transfers this activated L-proline derivative to aculenes D and C to produce respectively aculenes B and A. The dioxygenase aneA converts aculene D into aculene C, and aculene B into aculene A by introducing the 5,6-alkene moiety. Asperculanes A, B, C and F, as well as 14-prolyl asperculane C, might be shunt products of the pathway. In Aspergillus aculeatus (strain ATCC 16872 / CBS 172.66 / WB 5094), this protein is Thiohydrolase aneE.